The sequence spans 96 residues: Large ribosomal subunit protein bL25 (96 aa).

Belongs to the bacterial ribosomal protein bL25 family. Part of the 50S ribosomal subunit; part of the 5S rRNA/L5/L18/L25 subcomplex. Contacts the 5S rRNA. Binds to the 5S rRNA independently of L5 and L18.

Functionally, this is one of the proteins that binds to the 5S RNA in the ribosome where it forms part of the central protuberance. The sequence is that of Large ribosomal subunit protein bL25 from Buchnera aphidicola subsp. Schizaphis graminum (strain Sg).